The following is a 1960-amino-acid chain: Nuclear pore complex protein Nup98-Nup96 (1960 aa).

46 repeat units span residues phenylalanine 2–glycine 3, phenylalanine 9–glycine 10, phenylalanine 18–glycine 19, phenylalanine 30–glycine 31, phenylalanine 35–glycine 36, phenylalanine 43–glycine 44, phenylalanine 59–glycine 60, phenylalanine 73–glycine 74, phenylalanine 81–glycine 82, phenylalanine 92–glycine 93, phenylalanine 105–glycine 106, phenylalanine 117–glycine 118, phenylalanine 125–glycine 126, phenylalanine 135–glycine 136, phenylalanine 148–glycine 149, phenylalanine 160–glycine 161, phenylalanine 163–glycine 164, phenylalanine 174–glycine 175, phenylalanine 264–glycine 265, phenylalanine 266–glycine 267, phenylalanine 282–glycine 283, phenylalanine 293–glycine 294, phenylalanine 304–glycine 305, phenylalanine 309–glycine 310, phenylalanine 319–glycine 320, phenylalanine 333–glycine 334, phenylalanine 352–glycine 353, phenylalanine 358–glycine 359, phenylalanine 365–glycine 366, phenylalanine 377–glycine 378, phenylalanine 384–glycine 385, phenylalanine 387–glycine 388, phenylalanine 400–glycine 401, phenylalanine 413–glycine 414, phenylalanine 426–glycine 427, phenylalanine 428–glycine 429, phenylalanine 441–glycine 442, phenylalanine 454–glycine 455, phenylalanine 467–glycine 468, phenylalanine 493–glycine 494, phenylalanine 496–glycine 497, phenylalanine 516–glycine 517, phenylalanine 527–glycine 528, phenylalanine 546–glycine 547, phenylalanine 553–glycine 554, and phenylalanine 565–glycine 566. Residues phenylalanine 2 to glycine 566 form a 46 X 2 AA repeats of F-G region. Disordered regions lie at residues lysine 698–proline 768 and threonine 781–glutamine 860. Polar residues predominate over residues asparagine 704–serine 718. Residues glutamate 755 to proline 768 are compositionally biased toward basic and acidic residues. Composition is skewed to polar residues over residues threonine 781–asparagine 794 and arginine 806–serine 850. In terms of domain architecture, Peptidase S59 spans arginine 886 to phenylalanine 1028. Catalysis depends on serine 1029, which acts as the Nucleophile.

Belongs to the nucleoporin GLFG family. In terms of assembly, part of the nuclear pore complex (NPC). Interacts with Rae1. Nuclear pore complex protein Nup98: Interacts with pzg and Chro. Interacts with MBD-R2; the interaction allows Nup98 recruitment to chromatin. Interacts with Trx. Interacts with Wds. Interacts with Mgtor and Cp190. Upon ecdysone stimulation, interacts with EcR, CTCF, su(Hw) and Trl. Isoform A and isoform C are autoproteolytically cleaved to yield Nup98 and Nup96 or Nup98 only, respectively. In terms of tissue distribution, expressed in brain.

Its subcellular location is the chromosome. It is found in the nucleus. The protein localises to the nucleoplasm. The protein resides in the nucleus membrane. It localises to the nuclear pore complex. Functionally, part of the nuclear pore complex (NPC). Required for MAD import as part of the Nup107-160 complex and required for nuclear export of Moe probably via its association with Rae1. Plays a role in nuclear mRNA export. Promotes cell antiviral response by up-regulating FoxK-dependent antiviral gene transcription. In germline stem cells, involved in their maintenance and division together with the TGF-Beta and EGFR signaling pathways. In larval lymph glands, has a role in the maintenance of hematopoiesis by regulating Pvr expression. Part of the nuclear pore complex (NPC). In the nucleoplasm, binds to transcriptionally active chromatin with a preference for regulatory regions; co-localizes with RNA polymerase II in a RNA-independent manner and before transition into transcription elongation. Plays a role in the transcriptional memory process by stabilizing enhancer-promoter loops and by mediating anchoring of chromatin to the nuclear pore complex region. During larval development, interacts with trx and MBD-R2 and regulates transcription of developmental genes including ecdysone-responsive genes such as Eip74 and E23. Its function is as follows. Part of the nuclear pore complex (NPC). This Drosophila melanogaster (Fruit fly) protein is Nuclear pore complex protein Nup98-Nup96.